A 75-amino-acid chain; its full sequence is MARYFRRRKFCRFTAENVVEIDYKDVATLKNYITESGKIVPSRITGTRAKYQRQLARAIKRARYLALLPYTDNHQ.

It belongs to the bacterial ribosomal protein bS18 family. As to quaternary structure, part of the 30S ribosomal subunit. Forms a tight heterodimer with protein bS6.

Functionally, binds as a heterodimer with protein bS6 to the central domain of the 16S rRNA, where it helps stabilize the platform of the 30S subunit. This chain is Small ribosomal subunit protein bS18, found in Pasteurella multocida (strain Pm70).